Reading from the N-terminus, the 536-residue chain is Phosphoenolpyruvate carboxykinase (ATP) (536 aa).

Substrate-binding residues include Arg-62, Tyr-203, and Lys-209. ATP is bound by residues Lys-209, His-228, and 244-252; that span reads GLSGTGKTT. 2 residues coordinate Mn(2+): Lys-209 and His-228. Asp-265 provides a ligand contact to Mn(2+). Residues Glu-293, Arg-329, 445–446, and Thr-451 contribute to the ATP site; that span reads RI. Arg-329 is a binding site for substrate.

It belongs to the phosphoenolpyruvate carboxykinase (ATP) family. In terms of assembly, monomer. Mn(2+) serves as cofactor.

It localises to the cytoplasm. The enzyme catalyses oxaloacetate + ATP = phosphoenolpyruvate + ADP + CO2. The protein operates within carbohydrate biosynthesis; gluconeogenesis. Functionally, involved in the gluconeogenesis. Catalyzes the conversion of oxaloacetate (OAA) to phosphoenolpyruvate (PEP) through direct phosphoryl transfer between the nucleoside triphosphate and OAA. The protein is Phosphoenolpyruvate carboxykinase (ATP) of Actinobacillus pleuropneumoniae serotype 5b (strain L20).